A 41-amino-acid chain; its full sequence is Large ribosomal subunit protein bL36 (41 aa).

Belongs to the bacterial ribosomal protein bL36 family.

This is Large ribosomal subunit protein bL36 from Methylobacterium nodulans (strain LMG 21967 / CNCM I-2342 / ORS 2060).